Consider the following 118-residue polypeptide: Acetylcholine receptor subunit beta (118 aa).

The signal sequence occupies residues 1 to 15 (APTVALLLLCALCSA).

This sequence belongs to the ligand-gated ion channel (TC 1.A.9) family. Acetylcholine receptor (TC 1.A.9.1) subfamily. Beta-1/CHRNB1 sub-subfamily. Pentamer of two alpha chains, and one each of the beta, delta, and gamma chains.

It is found in the postsynaptic cell membrane. The protein localises to the cell membrane. It carries out the reaction K(+)(in) = K(+)(out). It catalyses the reaction Na(+)(in) = Na(+)(out). Its function is as follows. After binding acetylcholine, the AChR responds by an extensive change in conformation that affects all subunits and leads to opening of an ion-conducting channel across the plasma membrane. The sequence is that of Acetylcholine receptor subunit beta (CHRNB1) from Gallus gallus (Chicken).